The primary structure comprises 234 residues: uncharacterized protein (234 aa).

The ABC transporter domain maps to 5–234; it reads MELVDVWKIY…ERRGVVYGDT (230 aa). 41 to 48 is a binding site for ATP; that stretch reads GPSGSGKS.

It belongs to the ABC transporter superfamily.

This is an uncharacterized protein from Thermotoga maritima (strain ATCC 43589 / DSM 3109 / JCM 10099 / NBRC 100826 / MSB8).